A 119-amino-acid chain; its full sequence is Holo-[acyl-carrier-protein] synthase (119 aa).

D8 and E58 together coordinate Mg(2+).

Belongs to the P-Pant transferase superfamily. AcpS family. It depends on Mg(2+) as a cofactor.

It is found in the cytoplasm. The catalysed reaction is apo-[ACP] + CoA = holo-[ACP] + adenosine 3',5'-bisphosphate + H(+). Transfers the 4'-phosphopantetheine moiety from coenzyme A to a Ser of acyl-carrier-protein. In Streptococcus suis (strain 05ZYH33), this protein is Holo-[acyl-carrier-protein] synthase.